Consider the following 89-residue polypeptide: MTLSADKKQPIIDKFKLHENDTGSPEVQVAILTERINLLTEHLKTHRKDFHSRRGLLKMVGQRRALLNYLRDRAPDRYRKLIQELGLRK.

Belongs to the universal ribosomal protein uS15 family. In terms of assembly, part of the 30S ribosomal subunit. Forms a bridge to the 50S subunit in the 70S ribosome, contacting the 23S rRNA.

Its function is as follows. One of the primary rRNA binding proteins, it binds directly to 16S rRNA where it helps nucleate assembly of the platform of the 30S subunit by binding and bridging several RNA helices of the 16S rRNA. Functionally, forms an intersubunit bridge (bridge B4) with the 23S rRNA of the 50S subunit in the ribosome. In Desulforudis audaxviator (strain MP104C), this protein is Small ribosomal subunit protein uS15.